A 580-amino-acid chain; its full sequence is Tricyclene synthase TPS4, chloroplastic (580 aa).

The transit peptide at 1–41 (MLLNSSFISLPSFFKSQELGRTNLLIHRNGSPLLCYATNTN) directs the protein to the chloroplast. The (2E)-geranyl diphosphate site is built by R296, D334, D338, R475, and N478. Mg(2+)-binding residues include D334 and D338. Positions 334 to 338 (DDIYD) match the DDXXD motif motif. The Mg(2+) site is built by N478, T482, and E486.

This sequence belongs to the terpene synthase family. Tpsb subfamily. Mg(2+) is required as a cofactor. The cofactor is Mn(2+). As to expression, expressed in leaves.

The protein localises to the plastid. It is found in the chloroplast stroma. The enzyme catalyses (2E)-geranyl diphosphate = tricyclene + diphosphate. It carries out the reaction (2E)-geranyl diphosphate = (E)-beta-ocimene + diphosphate. It functions in the pathway secondary metabolite biosynthesis; terpenoid biosynthesis. Its function is as follows. Promotes the emission of terpenes volatile organic compounds (VOC) in response to damage mediated by arthropod herbivores (e.g. Spodoptera exigua), probably to attract natural enemies of the herbivores. The sequence is that of Tricyclene synthase TPS4, chloroplastic (TPS4) from Medicago truncatula (Barrel medic).